The chain runs to 149 residues: 3-dehydroquinate dehydratase (149 aa).

Residue Tyr23 is the Proton acceptor of the active site. Residues Asn74, His80, and Asp87 each contribute to the substrate site. The active-site Proton donor is the His100. Substrate-binding positions include 101–102 (LS) and Arg111.

Belongs to the type-II 3-dehydroquinase family. In terms of assembly, homododecamer.

It carries out the reaction 3-dehydroquinate = 3-dehydroshikimate + H2O. The protein operates within metabolic intermediate biosynthesis; chorismate biosynthesis; chorismate from D-erythrose 4-phosphate and phosphoenolpyruvate: step 3/7. In terms of biological role, catalyzes a trans-dehydration via an enolate intermediate. The chain is 3-dehydroquinate dehydratase from Ruegeria pomeroyi (strain ATCC 700808 / DSM 15171 / DSS-3) (Silicibacter pomeroyi).